The primary structure comprises 657 residues: Glycogen debranching enzyme (657 aa).

The active-site Nucleophile is the Asp336. The active-site Proton donor is the Glu371. The interval 460–479 (ANGEENRDGTNNNYSNNHGK) is disordered.

This sequence belongs to the glycosyl hydrolase 13 family.

The enzyme catalyses Hydrolysis of (1-&gt;6)-alpha-D-glucosidic linkages to branches with degrees of polymerization of three or four glucose residues in limit dextrin.. The protein operates within glycan degradation; glycogen degradation. Removes maltotriose and maltotetraose chains that are attached by 1,6-alpha-linkage to the limit dextrin main chain, generating a debranched limit dextrin. This chain is Glycogen debranching enzyme, found in Shigella dysenteriae serotype 1 (strain Sd197).